The following is a 463-amino-acid chain: tRNA-splicing endonuclease subunit Sen2 (463 aa).

Phosphoserine occurs at positions 32 and 147. The tract at residues 120–213 (HDESTVQKIL…VASPSSLNGH (94 aa)) is disordered. 2 stretches are compositionally biased toward basic and acidic residues: residues 139-149 (PYRERKGESPQ) and 159-170 (SSLEGREGKDEL). Residues Y367 and H375 contribute to the active site. Residues S406, S409, and S413 each carry the phosphoserine modification. Residue K414 is part of the active site.

This sequence belongs to the tRNA-intron endonuclease family. In terms of assembly, tRNA splicing endonuclease is a heterotetramer composed of TSEN2, TSEN15, TSEN34/LENG5 and TSEN54. tRNA splicing endonuclease complex also contains proteins of the pre-mRNA 3'-end processing machinery such as CLP1, CPSF1, CPSF4 and CSTF2.

It localises to the nucleus. The protein localises to the nucleolus. It carries out the reaction pretRNA = a 3'-half-tRNA molecule with a 5'-OH end + a 5'-half-tRNA molecule with a 2',3'-cyclic phosphate end + an intron with a 2',3'-cyclic phosphate and a 5'-hydroxyl terminus.. Functionally, constitutes one of the two catalytic subunit of the tRNA-splicing endonuclease complex, a complex responsible for identification and cleavage of the splice sites in pre-tRNA. It cleaves pre-tRNA at the 5'- and 3'-splice sites to release the intron. The products are an intron and two tRNA half-molecules bearing 2',3'-cyclic phosphate and 5'-OH termini. There are no conserved sequences at the splice sites, but the intron is invariably located at the same site in the gene, placing the splice sites an invariant distance from the constant structural features of the tRNA body. Probably carries the active site for 5'-splice site cleavage. The tRNA splicing endonuclease is also involved in mRNA processing via its association with pre-mRNA 3'-end processing factors, establishing a link between pre-tRNA splicing and pre-mRNA 3'-end formation, suggesting that the endonuclease subunits function in multiple RNA-processing events. The protein is tRNA-splicing endonuclease subunit Sen2 (Tsen2) of Rattus norvegicus (Rat).